Here is a 325-residue protein sequence, read N- to C-terminus: UPF0285 protein MMP0642 (325 aa).

Belongs to the UPF0285 family.

In Methanococcus maripaludis (strain DSM 14266 / JCM 13030 / NBRC 101832 / S2 / LL), this protein is UPF0285 protein MMP0642.